The chain runs to 1042 residues: Elongation factor 3 (1042 aa).

HEAT repeat units lie at residues 9-46, 86-124, 167-204, 206-242, 243-280, and 289-327; these read KVLM…DPDT, PYLV…TMNP, YRLP…LISN, DIDK…EVHA, STLS…LVED, and PKLI…VKEG. ABC transporter domains follow at residues 425–642 and 668–994; these read EEGE…YQDI and CRMR…EQEE. ADP is bound by residues asparagine 704, glutamate 923, asparagine 926, and histidine 952. Positions 1009–1042 are disordered; that stretch reads KKAKKLTSSELRKKKKERMARRKKGEEVFSDEDD. Basic residues predominate over residues 1020-1031; sequence RKKKKERMARRK.

It belongs to the ABC transporter superfamily. ABCF family. EF3 subfamily. In terms of assembly, monomer.

It localises to the cytoplasm. The catalysed reaction is ATP + H2O = ADP + phosphate + H(+). The protein operates within protein biosynthesis; polypeptide chain elongation. Ribosome-dependent ATPase that functions in cytoplasmic translation elongation. Required for the ATP-dependent release of deacylated tRNA from the ribosomal E-site during protein biosynthesis. Stimulates the eEF1A-dependent binding of aminoacyl-tRNA to the ribosomal A-site, which has reduced affinity for tRNA as long as the E-site is occupied. Assists translation termination by stimulating the release of nascent protein from the ribosome by release factors. The sequence is that of Elongation factor 3 (TEF3) from Pneumocystis carinii.